The following is a 707-amino-acid chain: Leucine-rich repeat neuronal protein 3 (707 aa).

The N-terminal stretch at 1–22 is a signal peptide; sequence MKDTPLQVHVLLGLAITTLVQA. The 47-residue stretch at 23 to 69 folds into the LRRNT domain; it reads IDKKVDCPQLCTCEIRPWFTPRSIYMEASTVDCNDLGLLNFPARLPA. Residues 23-626 are Extracellular-facing; the sequence is IDKKVDCPQL…DGKEYGKNHT (604 aa). LRR repeat units follow at residues 70-91, 93-114, 117-138, 141-162, 165-186, 189-210, 213-234, 237-258, 261-282, 285-304, 310-332, and 335-358; these read DTQILLLQTNNIARIEHSTDFP, NLTGLDLSQNNLSSVTNINVQK, QLLSVYLEENKLTELPEKCLYG, NLQELYVNHNLLSTISPGAFIG, NLLRLHLNSNRLQMINSQWFDA, NLEILMLGDNPIIRIKDMNFQP, KLRSLVIAGINLTEIPDDALAG, NLESISFYDNRLSKVPQVALQK, NLKFLDLNKNPINRIRRGDFSN, HLKELGINNMPELVSIDSLA, DLRKIEATNNPRLSYIHPNAFFR, and KLESLMLNTNALSALYHGTIESLP. 2 N-linked (GlcNAc...) asparagine glycosylation sites follow: N93 and N103. The N-linked (GlcNAc...) asparagine glycan is linked to N223. In terms of domain architecture, LRRCT spans 368–421; that stretch reads NPIRCDCVIRWINMNKTNIRFMEPDSLFCVDPPEFQGQNVRQVHFRDMMEICLP. N382 is a glycosylation site (N-linked (GlcNAc...) asparagine). An Ig-like C2-type domain is found at 421-514; sequence PLIAPESFPS…DLKSIMIKVG (94 aa). C444 and C496 are oxidised to a cystine. Residues N522, N579, N608, and N624 are each glycosylated (N-linked (GlcNAc...) asparagine). A Fibronectin type-III domain is found at 523 to 614; the sequence is GSLNIKIRDI…QCVNVTTKSL (92 aa). The chain crosses the membrane as a helical span at residues 627-647; that stretch reads VFVACVGGLLGIIGVMCLFSC. Topologically, residues 648 to 707 are cytoplasmic; sequence VSQEGSSEGEHSYAVNHCHKPALAFSELYPPLINLWESSKEKRATLEVKATAIGVPTNMS.

In terms of tissue distribution, expressed in the brain, in Stronger expression in the ventricular zone and anlage of thalamus, spinal cord, and dorsal root ganglion in 11-17 dpc cerebellum and cerebral cortex in adults.

The protein localises to the membrane. This is Leucine-rich repeat neuronal protein 3 (Lrrn3) from Mus musculus (Mouse).